The following is a 704-amino-acid chain: Polyribonucleotide nucleotidyltransferase (704 aa).

Mg(2+) contacts are provided by Asp-487 and Asp-493. The 60-residue stretch at 554–613 (PRLLTIKIHPDKIREVIGKGGSTIQAITKETGTQIDIQDDGTIIIASVNAIAAQAAKSRI) folds into the KH domain. One can recognise an S1 motif domain in the interval 623 to 691 (GRIYEGKVAK…KQGRIRLSIK (69 aa)).

The protein belongs to the polyribonucleotide nucleotidyltransferase family. In terms of assembly, component of the RNA degradosome, which is a multiprotein complex involved in RNA processing and mRNA degradation. It depends on Mg(2+) as a cofactor.

The protein resides in the cytoplasm. The catalysed reaction is RNA(n+1) + phosphate = RNA(n) + a ribonucleoside 5'-diphosphate. In terms of biological role, involved in mRNA degradation. Catalyzes the phosphorolysis of single-stranded polyribonucleotides processively in the 3'- to 5'-direction. The polypeptide is Polyribonucleotide nucleotidyltransferase (Xanthomonas campestris pv. campestris (strain B100)).